The primary structure comprises 126 residues: MADEIAKAQVARPGGDTIFGKIIRKEIPAKIIFEDDRCLAFHDISPQAPTHFLVIPKKHISQISVAEDDDESLLGHLMIVGKKCAADLGLNKGYRMVVNEGSDGGQSVYHVHLHVLGGRQMHWPPG.

N-acetylalanine is present on alanine 2. The region spanning 18–126 is the HIT domain; that stretch reads IFGKIIRKEI…GGRQMHWPPG (109 aa). Residues lysine 21 and lysine 30 each carry the N6-acetyllysine modification. Residue 43-44 participates in AMP binding; the sequence is DI. Residues serine 45 and serine 72 each carry the phosphoserine modification. AMP contacts are provided by residues asparagine 99, 105-107, and 112-114; these read GQS and HLH. Residues 110–114 carry the Histidine triad motif motif; it reads HVHLH. The active-site Tele-AMP-histidine intermediate is histidine 112.

The protein belongs to the HINT family. In terms of assembly, homodimer. Interacts with CDK7. Interacts with RUVBL1 and RUVBL2 and is associated with the LEF1/TCF1-CTNNB1 complex and with a KAT5 histone acetyltransferase complex. Identified in a complex with MITF and CTNNB1. Interacts with CDC34 and RBX1, and is part of a SCF (SKP2-CUL1-F-box protein) E3 ubiquitin-protein ligase complex. Interacts with SUMO1, SUMO2 and RGS17. Interacts with the Ten-1 ICD form of TENM1. Interacts with CALM1; interaction increases in the presence of calcium ions. Widely expressed.

The protein resides in the cytoplasm. It is found in the nucleus. It carries out the reaction adenosine 5'-phosphoramidate + H2O = AMP + NH4(+). Its function is as follows. Exhibits adenosine 5'-monophosphoramidase activity, hydrolyzing purine nucleotide phosphoramidates with a single phosphate group such as adenosine 5'monophosphoramidate (AMP-NH2) to yield AMP and NH2. Hydrolyzes adenosine 5'monophosphomorpholidate (AMP-morpholidate) and guanosine 5'monophosphomorpholidate (GMP-morpholidate). Hydrolyzes lysyl-AMP (AMP-N-epsilon-(N-alpha-acetyl lysine methyl ester)) generated by lysine tRNA ligase, as well as Met-AMP, His-AMP and Asp-AMP, lysyl-GMP (GMP-N-epsilon-(N-alpha-acetyl lysine methyl ester)) and AMP-N-alanine methyl ester. Hydrolyzes 3-indolepropionic acyl-adenylate, tryptamine adenosine phosphoramidate monoester and other fluorogenic purine nucleoside tryptamine phosphoramidates in vitro. Can also convert adenosine 5'-O-phosphorothioate and guanosine 5'-O-phosphorothioate to the corresponding nucleoside 5'-O-phosphates with concomitant release of hydrogen sulfide. In addition, functions as scaffolding protein that modulates transcriptional activation by the LEF1/TCF1-CTNNB1 complex and by the complex formed with MITF and CTNNB1. Modulates p53/TP53 levels and p53/TP53-mediated apoptosis. Modulates proteasomal degradation of target proteins by the SCF (SKP2-CUL1-F-box protein) E3 ubiquitin-protein ligase complex. Also exhibits SUMO-specific isopeptidase activity, deconjugating SUMO1 from RGS17. Deconjugates SUMO1 from RANGAP1. This chain is Adenosine 5'-monophosphoramidase HINT1 (HINT1), found in Homo sapiens (Human).